The sequence spans 209 residues: Aspartate kinase-like protein lolA1 (209 aa).

Residues 1 to 11 (MLDESPMRKGD) show a composition bias toward basic and acidic residues. The interval 1 to 27 (MLDESPMRKGDSVSNDQSNPESNASVS) is disordered. Residues 12–27 (SVSNDQSNPESNASVS) show a composition bias toward polar residues.

This sequence belongs to the aspartokinase family.

Its pathway is alkaloid biosynthesis. Functionally, aspartokinase-like protein; part of the gene cluster that mediates the biosynthesis of loline alkaloids, potent insecticidal agents composed of a pyrrolizidine ring system and an uncommon ether bridge linking carbons 2 and 7. Lolines are structurally differentiated by the various modifications of the L-amino group and include norloline, loline, N-methylloline, N-acetylloline, N-acetylnorloline, and N-formylloline. The first committed step is the condensation of O-acetyl-L-homoserine (derived from L-aspartic acid) and L-proline, probably catalyzed by the gamma-type pyridoxal 5'-phosphate(PLP)-dependent enzyme lolC, to give the diamino diacid, NACPP. Ensuing cyclization, decarboxylation, and acetylation steps yield 1-exo-acetamidopyrrolizidine (AcAP). LolO is required for installation of the ether bridge upon the pathway intermediate, 1-exo-acetamidopyrrolizidine (AcAP). In sequential 2-oxoglutarate- and O(2)-consuming steps, lolO removes hydrogens from C2 and C7 of AcAP to form both carbon-oxygen bonds in N-acetylnorloline (NANL), the precursor to all other lolines. The enzymes lolD, lolE, lolF and lolT have also been proposed to be involved in the ether-bridge installation. Further processing of the exocyclic moiety of NANL by fungal N-acetamidase (LolN), methyltransferase (LolM), and cytochrome P450 (LolP) enzymes, with occasional involvement of a plant acetyltransferase, generates the other known lolines. LolN transforms NANL to norlonine which is monomethylated and dimethylated to respectively lonine and N-methyllonine (NML) by lolM. LolP catalyzes hydroxylation of the methyl group in N-methylloline (NML) and further oxygenation to N-formylloline (NFL). A plant acetyltransferase is responsible for the acetylation of loline to form N-acetylloline (NAL). LolA might interact with aspartate kinase to prevent feedback inhibition of its activity by these end products and thereby promote production of L-homoserine from L-aspartate. In Epichloe uncinata (Endophyte fungus), this protein is Aspartate kinase-like protein lolA1.